A 139-amino-acid polypeptide reads, in one-letter code: Large ribosomal subunit protein uL13 (139 aa).

Belongs to the universal ribosomal protein uL13 family. As to quaternary structure, part of the 50S ribosomal subunit.

In terms of biological role, this protein is one of the early assembly proteins of the 50S ribosomal subunit, although it is not seen to bind rRNA by itself. It is important during the early stages of 50S assembly. The chain is Large ribosomal subunit protein uL13 from Methanococcoides burtonii (strain DSM 6242 / NBRC 107633 / OCM 468 / ACE-M).